Reading from the N-terminus, the 376-residue chain is Serine-arginine protein 55 (376 aa).

The RRM 1 domain maps to 4–74; sequence SRVYVGGLPY…ERVVVEPARG (71 aa). Residues 73–114 form a disordered region; the sequence is RGTARGSNRDRYDDRYGGRRGGGGGRYNEKNKNSRSSSRYGP. Residues 79–89 show a composition bias toward basic and acidic residues; that stretch reads SNRDRYDDRYG. The RRM 2 domain occupies 120–193; the sequence is YRLIVENLSS…RRIHLVEDRR (74 aa). The residue at position 165 (Ser165) is a Phosphoserine. The segment covering 185–194 has biased composition (basic and acidic residues); the sequence is RIHLVEDRRG. A disordered region spans residues 185–376; the sequence is RIHLVEDRRG…PDRNNESMDD (192 aa). The segment covering 196 to 205 has biased composition (gly residues); it reads RSGGGGGSGR. 2 stretches are compositionally biased toward basic residues: residues 215–263 and 271–283; these read SRSR…SRSN and SKSK…RSRS. The span at 284–304 shows a compositional bias: basic and acidic residues; sequence PKRERDSRSRSRSVSKRESRS.

Belongs to the splicing factor SR family. Extensively phosphorylated on serine residues in the RS domain.

The protein resides in the nucleus. Essential for development. May have a critical role in splicing or in controlling alternative splice site use of at least some pre-mRNA in vivo. Not required for all splicing. May play a general role in the condensation or decondensation of chromatin. The protein is Serine-arginine protein 55 (B52) of Drosophila melanogaster (Fruit fly).